An 810-amino-acid polypeptide reads, in one-letter code: DNA gyrase subunit A (810 aa).

The 467-residue stretch at 36-502 (LPDVRDGLKP…EVLKTSMSDL (467 aa)) folds into the Topo IIA-type catalytic domain. The O-(5'-phospho-DNA)-tyrosine intermediate role is filled by Tyr124. Residues 529–535 (QGIGGKG) carry the GyrA-box motif.

This sequence belongs to the type II topoisomerase GyrA/ParC subunit family. Heterotetramer, composed of two GyrA and two GyrB chains. In the heterotetramer, GyrA contains the active site tyrosine that forms a transient covalent intermediate with DNA, while GyrB binds cofactors and catalyzes ATP hydrolysis.

The protein resides in the cytoplasm. The catalysed reaction is ATP-dependent breakage, passage and rejoining of double-stranded DNA.. Functionally, a type II topoisomerase that negatively supercoils closed circular double-stranded (ds) DNA in an ATP-dependent manner to modulate DNA topology and maintain chromosomes in an underwound state. Negative supercoiling favors strand separation, and DNA replication, transcription, recombination and repair, all of which involve strand separation. Also able to catalyze the interconversion of other topological isomers of dsDNA rings, including catenanes and knotted rings. Type II topoisomerases break and join 2 DNA strands simultaneously in an ATP-dependent manner. The chain is DNA gyrase subunit A from Borrelia hermsii (strain HS1 / DAH).